Consider the following 193-residue polypeptide: Flagellar transcriptional regulator FlhC (193 aa).

Zn(2+) is bound by residues Cys-137, Cys-140, Cys-158, and Cys-161.

The protein belongs to the FlhC family. In terms of assembly, heterohexamer composed of two FlhC and four FlhD subunits. Each FlhC binds a FlhD dimer, forming a heterotrimer, and a hexamer assembles by dimerization of two heterotrimers. It depends on Zn(2+) as a cofactor.

The protein resides in the cytoplasm. Functionally, functions in complex with FlhD as a master transcriptional regulator that regulates transcription of several flagellar and non-flagellar operons by binding to their promoter region. Activates expression of class 2 flagellar genes, including fliA, which is a flagellum-specific sigma factor that turns on the class 3 genes. Also regulates genes whose products function in a variety of physiological pathways. The chain is Flagellar transcriptional regulator FlhC from Pectobacterium carotovorum (Erwinia carotovora).